A 190-amino-acid polypeptide reads, in one-letter code: Acyl-acyl carrier protein thioesterase ATL3, chloroplastic (190 aa).

Residues 1–49 constitute a chloroplast transit peptide; the sequence is MFLQVTGTATPAMPAVVFLNSWRRPLSIPLRSVKTFKPLAFFDLKGGKG. The active site involves Asp66.

Belongs to the 4-hydroxybenzoyl-CoA thioesterase family. In terms of tissue distribution, highly expressed in stems and flowers and at lower levels in rosette leaves, cauline leaves and siliques.

The protein localises to the plastid. It localises to the chloroplast. Its function is as follows. Acyl-ACP thioesterase involved in the production of fatty acids and beta-keto fatty acids. Can produce fatty acids of long chain (14:1 and 16:1) and beta-keto fatty acids of medium to long chain (8:0, 10:0, 12:0, 12:1, 14:0 and 16:0) when expressed in a heterologous organism (E.coli). Possesses thioesterase activity for lauroyl-ACP (12:0-ACP) in vitro. May play a role in the generation of long fatty acids in the chloroplast. The sequence is that of Acyl-acyl carrier protein thioesterase ATL3, chloroplastic from Arabidopsis thaliana (Mouse-ear cress).